We begin with the raw amino-acid sequence, 348 residues long: E3 ubiquitin-protein ligase MARCHF9 (348 aa).

The interval 48–96 (ARDGDGDEEEYYGSEPRARGLAGDKEPRAGPPPPPAPPPPPPGALDALS) is disordered. Over residues 63 to 75 (PRARGLAGDKEPR) the composition is skewed to basic and acidic residues. A compositionally biased stretch (pro residues) spans 76–90 (AGPPPPPAPPPPPPG). The segment at 102-162 (DSGLRTPQCR…ELCYFKYQVL (61 aa)) adopts an RING-CH-type zinc-finger fold. Positions 110, 113, 126, 128, 136, 139, 152, and 155 each coordinate Zn(2+). The next 2 helical transmembrane spans lie at 185–205 (IAAI…LIWS) and 219–239 (LFQI…GLIV). Disordered stretches follow at residues 272 to 304 (GDTG…AAQR) and 328 to 348 (PPDA…VTTV).

Homodimer.

It is found in the golgi apparatus membrane. The protein localises to the lysosome membrane. The catalysed reaction is S-ubiquitinyl-[E2 ubiquitin-conjugating enzyme]-L-cysteine + [acceptor protein]-L-lysine = [E2 ubiquitin-conjugating enzyme]-L-cysteine + N(6)-ubiquitinyl-[acceptor protein]-L-lysine.. Its pathway is protein modification; protein ubiquitination. Its function is as follows. E3 ubiquitin-protein ligase that may mediate ubiquitination of MHC-I, CD4 and ICAM1, and promote their subsequent endocytosis and sorting to lysosomes via multivesicular bodies. E3 ubiquitin ligases accept ubiquitin from an E2 ubiquitin-conjugating enzyme in the form of a thioester and then directly transfer the ubiquitin to targeted substrates. The chain is E3 ubiquitin-protein ligase MARCHF9 (Marchf9) from Mus musculus (Mouse).